Here is a 110-residue protein sequence, read N- to C-terminus: Protein RnfH (110 aa).

A disordered region spans residues 86 to 110 (RQRRVEKSRQEGSVEGRKWLPKDSR). The span at 88–110 (RRVEKSRQEGSVEGRKWLPKDSR) shows a compositional bias: basic and acidic residues.

The protein belongs to the UPF0125 (RnfH) family.

The polypeptide is Protein RnfH (Paraburkholderia phymatum (strain DSM 17167 / CIP 108236 / LMG 21445 / STM815) (Burkholderia phymatum)).